Consider the following 154-residue polypeptide: uncharacterized protein (154 aa).

The signal sequence occupies residues 1–21 (MSISSGSFAQPAAVVSSPGVT).

This sequence belongs to the ivy family.

Its subcellular location is the periplasm. This is an uncharacterized protein from Yersinia pestis.